We begin with the raw amino-acid sequence, 779 residues long: ATP-dependent RNA helicase SUPV3L1, mitochondrial (779 aa).

Residues 1–40 (MSLPRCTLLWARLPAGRGAGPRAAPCSALRALVGSFPGAS) constitute a mitochondrion transit peptide. Position 99 is an N6-acetyllysine (K99). One can recognise a Helicase ATP-binding domain in the interval 194 to 334 (EARARQRKII…AINLVSELLY (141 aa)). Residue 207–214 (GPTNSGKT) coordinates ATP. One can recognise a Helicase C-terminal domain in the interval 353–521 (VLDHALESLD…PTAEQIEMFA (169 aa)). The tract at residues 650-779 (PDSSLVRSLQ…RRKKKDPDSD (130 aa)) is interaction with LAMTOR5, important for protein stability. The segment covering 693 to 703 (SGDQSRLSGAS) has biased composition (polar residues). 2 disordered regions span residues 693–732 (SGDQ…KELP) and 754–779 (EWLT…PDSD). Position 725 is a phosphoserine (S725). Over residues 761-779 (EHSREKVGTRRKKKDPDSD) the composition is skewed to basic and acidic residues.

It belongs to the helicase family. Homodimer; in free form. Component of the mitochondrial degradosome (mtEXO) complex which is a heteropentamer containing 2 copies of SUPV3L1 and 3 copies of PNPT1. As part of mitochondrial degradosome complex, interacts with GRSF1 in a RNA-dependent manner; the interaction enhances the activity of the complex. Interacts with LAMTOR5/HBXIP, WRN and BLM. Mg(2+) is required as a cofactor. It depends on Mn(2+) as a cofactor.

The protein localises to the nucleus. It localises to the mitochondrion matrix. The protein resides in the mitochondrion nucleoid. The catalysed reaction is ATP + H2O = ADP + phosphate + H(+). Helicase activity toward DNA substrate is inhibited by micromolar concentrations of 5,6-dichloro-1-(beta-D-ribofuranosyl)benzotriazole (DRBT) and 4,5,6,7-tetrabromobenzotriazole (TBBT). Helicase activity toward RNA substrate is inhibited by elevated concentrations of TBBT. Inhibited by some ring-expanded nucleoside analogs. Major helicase player in mitochondrial RNA metabolism. Component of the mitochondrial degradosome (mtEXO) complex, that degrades 3' overhang double-stranded RNA with a 3'-to-5' directionality in an ATP-dependent manner. Involved in the degradation of non-coding mitochondrial transcripts (MT-ncRNA) and tRNA-like molecules. ATPase and ATP-dependent multisubstrate helicase, able to unwind double-stranded (ds) DNA and RNA, and RNA/DNA heteroduplexes in the 5'-to-3' direction. Plays a role in the RNA surveillance system in mitochondria; regulates the stability of mature mRNAs, the removal of aberrantly formed mRNAs and the rapid degradation of non coding processing intermediates. Also implicated in recombination and chromatin maintenance pathways. May protect cells from apoptosis. Associates with mitochondrial DNA. This is ATP-dependent RNA helicase SUPV3L1, mitochondrial (Supv3l1) from Mus musculus (Mouse).